A 288-amino-acid polypeptide reads, in one-letter code: GDSL esterase/lipase At3g43550 (288 aa).

The N-terminal stretch at 1 to 19 (MKLQIIWLALVLIAVETYA) is a signal peptide. N-linked (GlcNAc...) asparagine glycosylation occurs at asparagine 25. Serine 37 (nucleophile) is an active-site residue.

This sequence belongs to the 'GDSL' lipolytic enzyme family.

It localises to the secreted. The polypeptide is GDSL esterase/lipase At3g43550 (Arabidopsis thaliana (Mouse-ear cress)).